A 436-amino-acid polypeptide reads, in one-letter code: 3-phosphoshikimate 1-carboxyvinyltransferase (436 aa).

Positions 22, 23, and 27 each coordinate 3-phosphoshikimate. K22 contributes to the phosphoenolpyruvate binding site. Residues G95 and R123 each coordinate phosphoenolpyruvate. 3-phosphoshikimate contacts are provided by S170, S171, Q172, S201, D322, and K349. A phosphoenolpyruvate-binding site is contributed by Q172. Residue D322 is the Proton acceptor of the active site. The phosphoenolpyruvate site is built by R353, R397, and K422.

Belongs to the EPSP synthase family. As to quaternary structure, monomer.

It localises to the cytoplasm. The catalysed reaction is 3-phosphoshikimate + phosphoenolpyruvate = 5-O-(1-carboxyvinyl)-3-phosphoshikimate + phosphate. It functions in the pathway metabolic intermediate biosynthesis; chorismate biosynthesis; chorismate from D-erythrose 4-phosphate and phosphoenolpyruvate: step 6/7. Functionally, catalyzes the transfer of the enolpyruvyl moiety of phosphoenolpyruvate (PEP) to the 5-hydroxyl of shikimate-3-phosphate (S3P) to produce enolpyruvyl shikimate-3-phosphate and inorganic phosphate. In Ralstonia nicotianae (strain ATCC BAA-1114 / GMI1000) (Ralstonia solanacearum), this protein is 3-phosphoshikimate 1-carboxyvinyltransferase.